Consider the following 492-residue polypeptide: Cytochrome P450 monooxygenase ATEG_03631 (492 aa).

Residues 10–30 form a helical membrane-spanning segment; the sequence is FATLNPMVVVAIPVFLFVISL. A glycan (N-linked (GlcNAc...) asparagine) is linked at Asn-309. Cys-457 contacts heme.

It belongs to the cytochrome P450 family. It depends on heme as a cofactor.

The protein localises to the membrane. It functions in the pathway secondary metabolite biosynthesis. Its function is as follows. Cytochrome P450 monooxygenase; part of the cluster A that mediates the biosynthesis of azasperpyranones, members of the azaphilone family that exhibit anti-cancer activities. Azasperpyranones are synthesized by 2 clusters, A and B. Cluster A is responsible for the production of the polyhydric phenol moiety while the azaphilonoid scaffold is produced by the cluster B. The non-reducing polyketide synthase ATEG_03629 produces 5-methyl orsellinic acid, which is then reduced to 5-methyl orsellinic aldehyde by the NRPS-like protein ATEG_03630. 5-methyl orsellinic aldehyde is then first hydroxylated by the FAD-dependent monooxygenase ATEG_03635 and subsequently hydroxylated by the cytochrome P450 monooxygenase ATEG_03631 to produce the unstable polyhydric phenol precursor of azasperpyranones. On the other hand, the polyketide synthase ATEG_07659 is responsible for producing the 3,5-dimethyloctadienone moiety from acetyl-CoA, three malonyl-CoA, and two S-adenosyl methionines (SAM). The 3,5-dimethyloctadienone moiety is then loaded onto the SAT domain of ATEG_07661 and extended with four malonyl-CoA and one SAM, which leads to the formation of 2,4-dihydroxy-6-(5,7-dimethyl-2-oxo-trans-3-trans-5-nonadienyl)-3-methylbenzaldehyde (compound 8) after reductive release and aldol condensation. The FAD-dependent monooxygenase ATEG_07662 is the next enzyme in the biosynthesis sequence and hydroxylates the side chain at the benzylic position of compound 8. In Aspergillus nidulans, afoF, the ortholog of the FAD-dependent oxygenase ATEG_07660, is the key enzyme for the biosynthesis of asperfuranone by catalyzing the hydroxylation at C-8 of to prevent the formation of a six-membered ring hemiacetal intermediate and thus facilitating the formation of a five-membered ring to produce asperfuranone. In Aspergillus terreus, ATEG_07660 is probably not functional, which leads to the formation of the six-membered ring hemiacetal intermediate presperpyranone instead of asperfuranone. Finally, ATEG_03636 is involved in the condensation of the polyhydric phenol moiety produced by cluster A and the perasperpyranone precursor produced by cluster B, to yield azasperpyranone A. Further modifications of azasperpyranone A result in the production of derivatives, including azasperpyranone B to F. This chain is Cytochrome P450 monooxygenase ATEG_03631, found in Aspergillus terreus (strain NIH 2624 / FGSC A1156).